A 426-amino-acid polypeptide reads, in one-letter code: Adenylosuccinate synthetase (426 aa).

GTP contacts are provided by residues 11–17 (GDEGKGK) and 39–41 (GHT). Residue Asp12 is the Proton acceptor of the active site. The Mg(2+) site is built by Asp12 and Gly39. IMP contacts are provided by residues 12–15 (DEGK), 37–40 (NAGH), Thr130, Arg144, Asn226, Thr241, and Arg305. His40 (proton donor) is an active-site residue. Residue 301 to 307 (VTTGRKR) participates in substrate binding. Residues Arg307, 333–335 (KLD), and 415–417 (GTG) contribute to the GTP site.

The protein belongs to the adenylosuccinate synthetase family. Homodimer. The cofactor is Mg(2+).

The protein resides in the cytoplasm. It carries out the reaction IMP + L-aspartate + GTP = N(6)-(1,2-dicarboxyethyl)-AMP + GDP + phosphate + 2 H(+). Its pathway is purine metabolism; AMP biosynthesis via de novo pathway; AMP from IMP: step 1/2. Its function is as follows. Plays an important role in the de novo pathway and in the salvage pathway of purine nucleotide biosynthesis. Catalyzes the first committed step in the biosynthesis of AMP from IMP. This Meyerozyma guilliermondii (strain ATCC 6260 / CBS 566 / DSM 6381 / JCM 1539 / NBRC 10279 / NRRL Y-324) (Yeast) protein is Adenylosuccinate synthetase.